A 565-amino-acid polypeptide reads, in one-letter code: DNA primase (565 aa).

The CHC2-type zinc-finger motif lies at 37 to 61; it reads CPFHSETNPSFYVHPGLKIYHCFGC. In terms of domain architecture, Toprim spans 248–329; that stretch reads GFFVITEGYF…NVLVATPSPY (82 aa). Mg(2+)-binding residues include Glu254, Asp298, and Asp300.

The protein belongs to the DnaG primase family. Monomer. Interacts with DnaB. Zn(2+) is required as a cofactor. It depends on Mg(2+) as a cofactor.

The catalysed reaction is ssDNA + n NTP = ssDNA/pppN(pN)n-1 hybrid + (n-1) diphosphate.. Its function is as follows. RNA polymerase that catalyzes the synthesis of short RNA molecules used as primers for DNA polymerase during DNA replication. The protein is DNA primase of Thermotoga maritima (strain ATCC 43589 / DSM 3109 / JCM 10099 / NBRC 100826 / MSB8).